The following is a 1316-amino-acid chain: DNA-directed RNA polymerase subunit beta' (1316 aa).

Zn(2+) contacts are provided by Cys-60, Cys-62, Cys-75, and Cys-78. Mg(2+)-binding residues include Asp-535, Asp-537, and Asp-539. Residues Cys-891, Cys-968, Cys-975, and Cys-978 each contribute to the Zn(2+) site.

The protein belongs to the RNA polymerase beta' chain family. As to quaternary structure, the RNAP catalytic core consists of 2 alpha, 1 beta, 1 beta' and 1 omega subunit. When a sigma factor is associated with the core the holoenzyme is formed, which can initiate transcription. Mg(2+) serves as cofactor. It depends on Zn(2+) as a cofactor.

The catalysed reaction is RNA(n) + a ribonucleoside 5'-triphosphate = RNA(n+1) + diphosphate. Its function is as follows. DNA-dependent RNA polymerase catalyzes the transcription of DNA into RNA using the four ribonucleoside triphosphates as substrates. This is DNA-directed RNA polymerase subunit beta' from Mycobacterium bovis (strain BCG / Pasteur 1173P2).